A 545-amino-acid polypeptide reads, in one-letter code: Esterase-5B (545 aa).

An N-terminal signal peptide occupies residues 1–19 (MYCAKLILLLGCFWISSSA). Cysteine 84 and cysteine 103 form a disulfide bridge. An N-linked (GlcNAc...) asparagine glycan is attached at asparagine 113. Residue serine 207 is the Acyl-ester intermediate of the active site. Cysteine 259 and cysteine 271 form a disulfide bridge. A glycan (N-linked (GlcNAc...) asparagine) is linked at asparagine 421. Histidine 467 serves as the catalytic Charge relay system. A glycan (N-linked (GlcNAc...) asparagine) is linked at asparagine 507. Cysteines 515 and 536 form a disulfide.

Belongs to the type-B carboxylesterase/lipase family. In terms of assembly, homodimer.

The protein localises to the secreted. The enzyme catalyses a carboxylic ester + H2O = an alcohol + a carboxylate + H(+). The protein is Esterase-5B (Est-5B) of Drosophila persimilis (Fruit fly).